Here is a 104-residue protein sequence, read N- to C-terminus: DNA-directed RNA polymerase subunit omega (104 aa).

This sequence belongs to the RNA polymerase subunit omega family. In terms of assembly, the RNAP catalytic core consists of 2 alpha, 1 beta, 1 beta' and 1 omega subunit. When a sigma factor is associated with the core the holoenzyme is formed, which can initiate transcription.

The catalysed reaction is RNA(n) + a ribonucleoside 5'-triphosphate = RNA(n+1) + diphosphate. Functionally, promotes RNA polymerase assembly. Latches the N- and C-terminal regions of the beta' subunit thereby facilitating its interaction with the beta and alpha subunits. This chain is DNA-directed RNA polymerase subunit omega, found in Streptococcus thermophilus (strain CNRZ 1066).